Consider the following 228-residue polypeptide: L-ribulose-5-phosphate 4-epimerase UlaF (228 aa).

Substrate contacts are provided by residues G26–N27, S43–G44, and S72–S73. The Zn(2+) site is built by D74, H93, and H95. The Proton donor/acceptor role is filled by D118. H167 contributes to the Zn(2+) binding site. Y225 acts as the Proton donor/acceptor in catalysis.

This sequence belongs to the aldolase class II family. AraD/FucA subfamily. The cofactor is Zn(2+).

It carries out the reaction L-ribulose 5-phosphate = D-xylulose 5-phosphate. It functions in the pathway cofactor degradation; L-ascorbate degradation; D-xylulose 5-phosphate from L-ascorbate: step 4/4. In terms of biological role, catalyzes the isomerization of L-ribulose 5-phosphate to D-xylulose 5-phosphate. Is involved in the anaerobic L-ascorbate utilization. This chain is L-ribulose-5-phosphate 4-epimerase UlaF, found in Escherichia coli O8 (strain IAI1).